A 257-amino-acid polypeptide reads, in one-letter code: Global transcriptional regulator CodY (257 aa).

A GAF domain region spans residues 1-155; it reads MSLLSKTREL…AATVIGMEIL (155 aa). Residues 203–222 constitute a DNA-binding region (H-T-H motif); it reads ASKVADGVGITRSVIVNALR.

Belongs to the CodY family.

It localises to the cytoplasm. Its function is as follows. DNA-binding global transcriptional regulator which is involved in the adaptive response to starvation and acts by directly or indirectly controlling the expression of numerous genes in response to nutrient availability. During rapid exponential growth, CodY is highly active and represses genes whose products allow adaptation to nutrient depletion. The chain is Global transcriptional regulator CodY from Staphylococcus aureus (strain bovine RF122 / ET3-1).